A 204-amino-acid polypeptide reads, in one-letter code: LexA repressor (204 aa).

The segment at residues 28 to 48 (RAEIAQELGFKSPNAAEEHLK) is a DNA-binding region (H-T-H motif). Catalysis depends on for autocatalytic cleavage activity residues Ser125 and Lys162.

The protein belongs to the peptidase S24 family. Homodimer.

The catalysed reaction is Hydrolysis of Ala-|-Gly bond in repressor LexA.. Represses a number of genes involved in the response to DNA damage (SOS response), including recA and lexA. In the presence of single-stranded DNA, RecA interacts with LexA causing an autocatalytic cleavage which disrupts the DNA-binding part of LexA, leading to derepression of the SOS regulon and eventually DNA repair. The polypeptide is LexA repressor (Ectopseudomonas mendocina (strain ymp) (Pseudomonas mendocina)).